Reading from the N-terminus, the 348-residue chain is Bombesin receptor-activated protein C6orf89 homolog (348 aa).

The Cytoplasmic portion of the chain corresponds to 1-58 (MDLAANEISIYDKLSETVDLVRQTGHQCGMSEKAIEKFIRQLLEKNEPQRGPPQYPLL). A helical membrane pass occupies residues 59–79 (IAVYKVLLTLGLILFTAYFVI). At 80–348 (QPFSSLAPEP…ICDGTTLSDL (269 aa)) the chain is on the extracellular side.

Homodimer. Interacts with BRS3. Interacts (via N-terminus) with SIN3B. In terms of processing, glycosylated.

It localises to the golgi apparatus membrane. Its subcellular location is the cytoplasm. Its function is as follows. Exhibits histone deacetylase (HDAC) enhancer properties. May play a role in cell cycle progression and wound repair of bronchial epithelial cells. The protein is Bombesin receptor-activated protein C6orf89 homolog of Mus musculus (Mouse).